The primary structure comprises 178 residues: Large ribosomal subunit protein uL6 (178 aa).

This sequence belongs to the universal ribosomal protein uL6 family. In terms of assembly, part of the 50S ribosomal subunit.

Its function is as follows. This protein binds to the 23S rRNA, and is important in its secondary structure. It is located near the subunit interface in the base of the L7/L12 stalk, and near the tRNA binding site of the peptidyltransferase center. This Campylobacter jejuni subsp. doylei (strain ATCC BAA-1458 / RM4099 / 269.97) protein is Large ribosomal subunit protein uL6.